The sequence spans 297 residues: tRNA dimethylallyltransferase (297 aa).

An ATP-binding site is contributed by 15–22; the sequence is GPTASGKS. 17–22 contacts substrate; the sequence is TASGKS. Interaction with substrate tRNA stretches follow at residues 40–43 and 164–168; these read DSMQ and QRIVR.

This sequence belongs to the IPP transferase family. As to quaternary structure, monomer. Mg(2+) is required as a cofactor.

The catalysed reaction is adenosine(37) in tRNA + dimethylallyl diphosphate = N(6)-dimethylallyladenosine(37) in tRNA + diphosphate. In terms of biological role, catalyzes the transfer of a dimethylallyl group onto the adenine at position 37 in tRNAs that read codons beginning with uridine, leading to the formation of N6-(dimethylallyl)adenosine (i(6)A). This is tRNA dimethylallyltransferase from Rhizobium etli (strain ATCC 51251 / DSM 11541 / JCM 21823 / NBRC 15573 / CFN 42).